Here is a 97-residue protein sequence, read N- to C-terminus: Small ribosomal subunit protein bS20 (97 aa).

This sequence belongs to the bacterial ribosomal protein bS20 family.

Binds directly to 16S ribosomal RNA. The protein is Small ribosomal subunit protein bS20 of Prochlorococcus marinus (strain AS9601).